A 524-amino-acid chain; its full sequence is MATQKEDHTALDLIIKSLKSPTMVCEGTHFDGKIPHTFVIFGASGDLAKKKIYPTLWWLYRDDLLPKPTKFCGYARSMLTVDSIKEQCLPYMKVQPHEQKKYEEFWALNEYVSGRYDGRTGFELLNQQLEIMENKNKANRIFYLALPPSVFEEVTVNIKQICMSVCGWNRVIIEKPFGRDDASSQALSDHLAGLFQEDQLYRIDHYLGKEMVQNLMTIRFGNKILSSTWNRENIASVLITFKEPFGTQGRGGYFDEFGIIRDVMQNHLLQILSLVAMEKPVSCHPDDIRDEKVKVLKSIEALTLDDMVLGQYLGNPQGTNDDARTGYVEDPTVSNDSNTPTYALGVLKINNERWQGVPFILRCGKALNERKAEVRIQYQDVPGDIFEGNTKRNELVIRVQPGEALYFKMMTKSPGITFDIEETELDLTYEHRYKDSYLPDAYERLILDVFCGSQMHFVRSDELREAWRIFTPILHQIEKEHIRPITYQYGSRGPKEADRKCEENNFKYSGSYKWHGGKAATSNH.

At Ser20 the chain carries Phosphoserine. Residues 42 to 49 (GASGDLAK), Arg76, and Lys175 each bind NADP(+). Residues Lys175, 205–209 (HYLGK), Glu243, and Asp262 each bind D-glucose 6-phosphate. The active-site Proton acceptor is His267. Residue Arg362 participates in NADP(+) binding. D-glucose 6-phosphate is bound by residues Lys365 and Arg370. NADP(+) contacts are provided by Lys371, Arg375, and Arg398. Gln400 provides a ligand contact to D-glucose 6-phosphate. Residues 406 to 408 (YFK), 426 to 428 (DLT), Arg492, Tyr508, and Trp514 each bind NADP(+).

It belongs to the glucose-6-phosphate dehydrogenase family.

The protein localises to the cytoplasm. Its subcellular location is the cytosol. It catalyses the reaction D-glucose 6-phosphate + NADP(+) = 6-phospho-D-glucono-1,5-lactone + NADPH + H(+). It participates in carbohydrate degradation; pentose phosphate pathway; D-ribulose 5-phosphate from D-glucose 6-phosphate (oxidative stage): step 1/3. Cytosolic glucose-6-phosphate dehydrogenase that catalyzes the first and rate-limiting step of the oxidative branch within the pentose phosphate pathway/shunt, an alternative route to glycolysis for the dissimilation of carbohydrates and a major source of reducing power and metabolic intermediates for fatty acid and nucleic acid biosynthetic processes. The polypeptide is Glucose-6-phosphate 1-dehydrogenase (Drosophila melanogaster (Fruit fly)).